Here is a 68-residue protein sequence, read N- to C-terminus: ATP synthase F(0) complex subunit 8 (68 aa).

The helical transmembrane segment at 8-24 (VWPTMIAPMLLTLFLIT) threads the bilayer. Position 54 is an N6-acetyllysine; alternate (K54). Residue K54 is modified to N6-succinyllysine; alternate. Position 57 is an N6-acetyllysine (K57).

This sequence belongs to the ATPase protein 8 family. As to quaternary structure, component of the ATP synthase complex composed at least of ATP5F1A/subunit alpha, ATP5F1B/subunit beta, ATP5MC1/subunit c (homooctomer), MT-ATP6/subunit a, MT-ATP8/subunit 8, ATP5ME/subunit e, ATP5MF/subunit f, ATP5MG/subunit g, ATP5MK/subunit k, ATP5MJ/subunit j, ATP5F1C/subunit gamma, ATP5F1D/subunit delta, ATP5F1E/subunit epsilon, ATP5PF/subunit F6, ATP5PB/subunit b, ATP5PD/subunit d, ATP5PO/subunit OSCP. ATP synthase complex consists of a soluble F(1) head domain (subunits alpha(3) and beta(3)) - the catalytic core - and a membrane F(0) domain - the membrane proton channel (subunits c, a, 8, e, f, g, k and j). These two domains are linked by a central stalk (subunits gamma, delta, and epsilon) rotating inside the F1 region and a stationary peripheral stalk (subunits F6, b, d, and OSCP). Interacts with PRICKLE3.

The protein resides in the mitochondrion membrane. In terms of biological role, subunit 8, of the mitochondrial membrane ATP synthase complex (F(1)F(0) ATP synthase or Complex V) that produces ATP from ADP in the presence of a proton gradient across the membrane which is generated by electron transport complexes of the respiratory chain. ATP synthase complex consist of a soluble F(1) head domain - the catalytic core - and a membrane F(1) domain - the membrane proton channel. These two domains are linked by a central stalk rotating inside the F(1) region and a stationary peripheral stalk. During catalysis, ATP synthesis in the catalytic domain of F(1) is coupled via a rotary mechanism of the central stalk subunits to proton translocation. In vivo, can only synthesize ATP although its ATP hydrolase activity can be activated artificially in vitro. Part of the complex F(0) domain. The polypeptide is ATP synthase F(0) complex subunit 8 (Gorilla gorilla gorilla (Western lowland gorilla)).